The following is a 705-amino-acid chain: Structure-specific endonuclease subunit SLX1 homolog (705 aa).

The GIY-YIG domain occupies 4-90 (RFHCVYLLTS…TASARLRHAI (87 aa)). Disordered stretches follow at residues 155–192 (RASS…DSKG) and 290–323 (ASFA…RVHT). Composition is skewed to polar residues over residues 160–175 (RVGT…SLQG) and 310–320 (STGSRTPSPQR). An SLX1-type zinc finger spans residues 446-526 (CSLCTLPLQP…PSQPCPCPLC (81 aa)). The span at 595-604 (KGAGEAPGAA) shows a compositional bias: low complexity. A disordered region spans residues 595-628 (KGAGEAPGAASTVRASTMHVGPARRDAPRVSSPS).

It belongs to the SLX1 family. As to quaternary structure, forms a heterodimer with a member of the SLX4 family. Requires a divalent metal cation as cofactor.

Its subcellular location is the nucleus. In terms of biological role, catalytic subunit of a heterodimeric structure-specific endonuclease that resolves DNA secondary structures generated during DNA repair and recombination. Has endonuclease activity towards branched DNA substrates, introducing single-strand cuts in duplex DNA close to junctions with ss-DNA. This chain is Structure-specific endonuclease subunit SLX1 homolog, found in Leishmania infantum.